A 371-amino-acid chain; its full sequence is Opsin Rh1 (371 aa).

Over 1–47 (MERYSTPLIGPSFAALTNGSVTDKVTPDMAHLVHPYWNQFPAMEPKW) the chain is Extracellular. N-linked (GlcNAc...) asparagine glycosylation occurs at N18. A helical transmembrane segment spans residues 48–72 (AKFLAAYMVLIATISWCGNGVVIYI). Over 73–84 (FSTTKSLRTPAN) the chain is Cytoplasmic. A helical transmembrane segment spans residues 85-110 (LLVINLAISDFGIMITNTPMMGINLF). Residues 111–124 (YETWVLGPLMCDIY) are Extracellular-facing. Cysteines 121 and 198 form a disulfide. The helical transmembrane segment at 125–144 (GGLGSAFGCSSILSMCMISL) threads the bilayer. The Cytoplasmic segment spans residues 145–163 (DRYNVIVKGMAGQPMTIKL). The helical transmembrane segment at 164 to 187 (AIMKIALIWFMASIWTLAPVFGWS) threads the bilayer. Topologically, residues 188–211 (RYVPEGNLTSCGIDYLERDWNPRS) are extracellular. Residues 212 to 239 (YLIFYSIFVYYLPLFLICYSYWFIIAAV) traverse the membrane as a helical segment. Residues 240–274 (SAHEKAMREQAKKMNVKSLRSSEDADKSAEGKLAK) lie on the Cytoplasmic side of the membrane. Residues 275 to 298 (VALVTISLWFMAWTPYTIINTLGL) form a helical membrane-spanning segment. Over 299–305 (FKYEGLT) the chain is Extracellular. A helical transmembrane segment spans residues 306–330 (PLNTIWGACFAKSAACYNPIVYGIS). Residue K317 is modified to N6-(retinylidene)lysine. Residues 331–371 (HPKYGIALKEKCPCCVFGKVDDGKASDATSQATNNESETKA) lie on the Cytoplasmic side of the membrane.

It belongs to the G-protein coupled receptor 1 family. Opsin subfamily. Phosphorylated on some or all of the serine and threonine residues present in the C-terminal region.

It is found in the cell projection. The protein localises to the rhabdomere membrane. In terms of biological role, visual pigments are the light-absorbing molecules that mediate vision. They consist of an apoprotein, opsin, covalently linked to cis-retinal. The polypeptide is Opsin Rh1 (NINAE) (Calliphora vicina (Blue blowfly)).